The primary structure comprises 432 residues: Transcriptional adapter 3 (432 aa).

Lys21 participates in a covalent cross-link: Glycyl lysine isopeptide (Lys-Gly) (interchain with G-Cter in SUMO2). The stretch at 40–69 (IEELDTLQLELETLLSSASRRLRVLEAETQ) forms a coiled coil. Positions 87 to 127 (GRDHELGAPPKHGKPKKQKLEGKTGHGPGPGPGRPKSKNVQ) are disordered. Lys129 participates in a covalent cross-link: Glycyl lysine isopeptide (Lys-Gly) (interchain with G-Cter in SUMO2). Positions 272–319 (NIISPMEDSPIPDMSGKESGADGASTSPRNQNKPFSVPHTKSLESRIK) are disordered. Phosphoserine occurs at positions 280 and 298. Residues 295–305 (ASTSPRNQNKP) show a composition bias toward polar residues. Residues 367–407 (LLRLAKEEVSRQELRQRVRMADNEVMDAFRKIMAARQKKRT) are a coiled coil. Lys418 is modified (N6-acetyllysine).

It belongs to the NGG1 family. As to quaternary structure, the PCAF complex is composed of a number of TBP-associated factors (TAFS), such as TAF5, TAF5L, TAF6, TAF6L, TAF9, TAF10 and TAF12, PCAF, and also PCAF-associated factors (PAFs), such as TADA2L/ADA2, TADA3L/ADA3 and SPT3. Interacts directly with TADA2L and PCAF and also with the high-risk HPV oncoprotein E6. Component of the STAGA transcription coactivator-HAT complex, at least composed of SUPT3H, GCN5L2, TAF5L, TAF6L, SUPT7L, TADA3L, TAD1L, TAF10, TAF12, TRRAP and TAF9. Component of the TFTC-HAT complex. Component of the ADA2A-containing complex (ATAC), composed of KAT14, KAT2A, TADA2L, TADA3L, ZZ3, MBIP, WDR5, YEATS2, CCDC101 and DR1.

It localises to the nucleus. Its function is as follows. Functions as a component of the PCAF complex. The PCAF complex is capable of efficiently acetylating histones in a nucleosomal context. The PCAF complex could be considered as the human version of the yeast SAGA complex. Also known as a coactivator for p53/TP53-dependent transcriptional activation. Component of the ATAC complex, a complex with histone acetyltransferase activity on histones H3 and H4. This Mus musculus (Mouse) protein is Transcriptional adapter 3 (Tada3).